The sequence spans 535 residues: GMP synthase [glutamine-hydrolyzing] (535 aa).

Positions 21–211 (LIVILDFGSQ…VYHICDCEPT (191 aa)) constitute a Glutamine amidotransferase type-1 domain. The active-site Nucleophile is Cys98. Active-site residues include His185 and Glu187. One can recognise a GMPS ATP-PPase domain in the interval 212-410 (WTTAAFVEEA…LGLPEEIVQR (199 aa)). 239 to 245 (SGGVDSS) lines the ATP pocket.

Homodimer.

The catalysed reaction is XMP + L-glutamine + ATP + H2O = GMP + L-glutamate + AMP + diphosphate + 2 H(+). It functions in the pathway purine metabolism; GMP biosynthesis; GMP from XMP (L-Gln route): step 1/1. Its function is as follows. Catalyzes the synthesis of GMP from XMP. This Thermosynechococcus vestitus (strain NIES-2133 / IAM M-273 / BP-1) protein is GMP synthase [glutamine-hydrolyzing].